Here is a 713-residue protein sequence, read N- to C-terminus: Forkhead box protein P2 (713 aa).

The span at 1 to 28 (MMQESATETISNSSMNQNGMSTLSSQLD) shows a compositional bias: polar residues. Disordered regions lie at residues 1–44 (MMQE…SSEV) and 283–337 (KHGG…TGAS). A compositionally biased stretch (low complexity) spans 290–303 (TTNNSSSTTSSTTS). The segment covering 313-322 (SIVNGQSSVL) has biased composition (polar residues). The span at 324-335 (ARRDSSSHEETG) shows a compositional bias: basic and acidic residues. The segment at 344–369 (GVCKWPGCESICEDFGQFLKHLNNEH) adopts a C2H2-type zinc-finger fold. The interval 386 to 407 (VQQLEIQLSKERERLQAMMTHL) is leucine-zipper. The interval 420-424 (PLNLV) is CTBP1-binding. The span at 436–457 (TSPQSLPQTPTTPTAPVTPITQ) shows a compositional bias: low complexity. Positions 436-463 (TSPQSLPQTPTTPTAPVTPITQGPSVIT) are disordered. Residues 502 to 592 (RPPFTYATLI…SQKITGSPTL (91 aa)) constitute a DNA-binding region (fork-head). 2 disordered regions span residues 647 to 666 (LDHI…QPHI) and 676 to 713 (VIAE…EDLE). The segment covering 697–713 (LEDDREIEEEPLSEDLE) has biased composition (acidic residues).

As to quaternary structure, forms homodimers and heterodimers with FOXP1 and FOXP4. Dimerization is required for DNA-binding. Interacts with CTBP1. Interacts with FOXP1. Interacts with TBR1. Interacts with ZMYM2.

It localises to the nucleus. In terms of biological role, transcriptional repressor that may play a role in the specification and differentiation of lung epithelium. May also play a role in developing neural, gastrointestinal and cardiovascular tissues. Can act with CTBP1 to synergistically repress transcription but CTPBP1 is not essential. Plays a role in synapse formation by regulating SRPX2 levels. The chain is Forkhead box protein P2 (FOXP2) from Gorilla gorilla gorilla (Western lowland gorilla).